We begin with the raw amino-acid sequence, 187 residues long: Adenine phosphoribosyltransferase (187 aa).

The protein belongs to the purine/pyrimidine phosphoribosyltransferase family. In terms of assembly, homodimer.

It localises to the cytoplasm. The enzyme catalyses AMP + diphosphate = 5-phospho-alpha-D-ribose 1-diphosphate + adenine. It functions in the pathway purine metabolism; AMP biosynthesis via salvage pathway; AMP from adenine: step 1/1. In terms of biological role, catalyzes a salvage reaction resulting in the formation of AMP, that is energically less costly than de novo synthesis. This is Adenine phosphoribosyltransferase from Yersinia enterocolitica serotype O:8 / biotype 1B (strain NCTC 13174 / 8081).